Here is a 237-residue protein sequence, read N- to C-terminus: Purine nucleoside phosphorylase DeoD-type (237 aa).

Histidine 4 lines the a purine D-ribonucleoside pocket. Residues glycine 20, arginine 24, arginine 43, and 87-90 contribute to the phosphate site; that span reads RVGT. A purine D-ribonucleoside contacts are provided by residues 179-181 and 203-204; these read EME and SD. Aspartate 204 acts as the Proton donor in catalysis.

This sequence belongs to the PNP/UDP phosphorylase family. As to quaternary structure, homohexamer; trimer of homodimers.

The catalysed reaction is a purine D-ribonucleoside + phosphate = a purine nucleobase + alpha-D-ribose 1-phosphate. It carries out the reaction a purine 2'-deoxy-D-ribonucleoside + phosphate = a purine nucleobase + 2-deoxy-alpha-D-ribose 1-phosphate. In terms of biological role, catalyzes the reversible phosphorolytic breakdown of the N-glycosidic bond in the beta-(deoxy)ribonucleoside molecules, with the formation of the corresponding free purine bases and pentose-1-phosphate. This chain is Purine nucleoside phosphorylase DeoD-type, found in Clostridium beijerinckii (strain ATCC 51743 / NCIMB 8052) (Clostridium acetobutylicum).